The sequence spans 110 residues: Ribonuclease P protein component 1 (110 aa).

This sequence belongs to the eukaryotic/archaeal RNase P protein component 1 family. In terms of assembly, consists of a catalytic RNA component and at least 4-5 protein subunits.

It localises to the cytoplasm. The enzyme catalyses Endonucleolytic cleavage of RNA, removing 5'-extranucleotides from tRNA precursor.. Functionally, part of ribonuclease P, a protein complex that generates mature tRNA molecules by cleaving their 5'-ends. This is Ribonuclease P protein component 1 from Methanosarcina mazei (strain ATCC BAA-159 / DSM 3647 / Goe1 / Go1 / JCM 11833 / OCM 88) (Methanosarcina frisia).